The sequence spans 136 residues: Large ribosomal subunit protein uL14 (136 aa).

It belongs to the universal ribosomal protein uL14 family.

This Dictyostelium discoideum (Social amoeba) protein is Large ribosomal subunit protein uL14 (rpl23).